The chain runs to 48 residues: Protein YgdT (48 aa).

This is Protein YgdT (ygdT) from Escherichia coli (strain K12).